The sequence spans 723 residues: LPS-assembly protein LptD (723 aa).

The N-terminal stretch at Met-1–Ser-23 is a signal peptide.

This sequence belongs to the LptD family. As to quaternary structure, component of the lipopolysaccharide transport and assembly complex. Interacts with LptE and LptA.

The protein resides in the cell outer membrane. Together with LptE, is involved in the assembly of lipopolysaccharide (LPS) at the surface of the outer membrane. This chain is LPS-assembly protein LptD, found in Nitrosomonas europaea (strain ATCC 19718 / CIP 103999 / KCTC 2705 / NBRC 14298).